Consider the following 298-residue polypeptide: MELLDLKKQGINIKEQIPLSRYTFTKTGGEAEYLAFPKSTDEVEKLVKVTRENKIPLTIIGNASNLIIRDGGIDGLVIILTDLKEIKVKDNKVTADAGAKIVDTAFTAAHHGLSGMEFAAGIPGSIGGGVFMNAGAYGGEMQEVVESVKVLTRAGEFKTYSNKEMEFSYRHSLVQDNGDIVLSATFSLTPGNKLEILDHMHYLNALRRYKQPVEYPSCGSVFKRPTGHFVGPMIIKAGLQGKQVGGAQDSTKHAGFIVNKGGATATDYLNLIHLIQKVIKEKYDIDLHTEVRIIGKEK.

In terms of domain architecture, FAD-binding PCMH-type spans 26-191 (KTGGEAEYLA…LSATFSLTPG (166 aa)). Residue R170 is part of the active site. S220 serves as the catalytic Proton donor. E290 is an active-site residue.

The protein belongs to the MurB family. FAD is required as a cofactor.

The protein resides in the cytoplasm. The enzyme catalyses UDP-N-acetyl-alpha-D-muramate + NADP(+) = UDP-N-acetyl-3-O-(1-carboxyvinyl)-alpha-D-glucosamine + NADPH + H(+). Its pathway is cell wall biogenesis; peptidoglycan biosynthesis. Functionally, cell wall formation. The protein is UDP-N-acetylenolpyruvoylglucosamine reductase of Lactobacillus helveticus (strain DPC 4571).